The sequence spans 584 residues: Putative adenine deaminase BA_3032/GBAA_3032/BAS2818 (584 aa).

This sequence belongs to the metallo-dependent hydrolases superfamily. Adenine deaminase family.

The enzyme catalyses adenine + H2O + H(+) = hypoxanthine + NH4(+). The sequence is that of Putative adenine deaminase BA_3032/GBAA_3032/BAS2818 from Bacillus anthracis.